A 301-amino-acid chain; its full sequence is B3 domain-containing protein At5g18090 (301 aa).

A DNA-binding region (TF-B3 1) is located at residues 18–113 (FFKILRSADL…CFTVDIYQID (96 aa)). Disordered regions lie at residues 123 to 142 (SATIASSSGRNKREQRNNIY) and 153 to 194 (SWSE…KMKV). A compositionally biased stretch (basic and acidic residues) spans 133–142 (NKREQRNNIY). Residues 209-301 (VPEFTLTIKK…PTEMLVRVSK (93 aa)) constitute a DNA-binding region (TF-B3 2).

It is found in the nucleus. The chain is B3 domain-containing protein At5g18090 from Arabidopsis thaliana (Mouse-ear cress).